A 211-amino-acid polypeptide reads, in one-letter code: uncharacterized protein (211 aa).

The next 6 membrane-spanning stretches (helical) occupy residues Trp-21–Ile-38, Trp-53–Val-75, Thr-82–Ala-104, Ile-124–Val-146, Pro-159–Tyr-178, and Ala-188–Trp-210.

The protein resides in the cell membrane. This is an uncharacterized protein from Archaeoglobus fulgidus (strain ATCC 49558 / DSM 4304 / JCM 9628 / NBRC 100126 / VC-16).